A 422-amino-acid chain; its full sequence is Probable tRNA pseudouridine synthase D 2 (422 aa).

D89 acts as the Nucleophile in catalysis. The region spanning 160–371 (GAPNYFDSQR…IYSERKILSI (212 aa)) is the TRUD domain.

This sequence belongs to the pseudouridine synthase TruD family.

It catalyses the reaction uridine(13) in tRNA = pseudouridine(13) in tRNA. Functionally, could be responsible for synthesis of pseudouridine from uracil-13 in transfer RNAs. This is Probable tRNA pseudouridine synthase D 2 from Methanocaldococcus jannaschii (strain ATCC 43067 / DSM 2661 / JAL-1 / JCM 10045 / NBRC 100440) (Methanococcus jannaschii).